The following is a 345-amino-acid chain: G-protein coupled receptor str-33 (345 aa).

At 1 to 11 the chain is on the extracellular side; the sequence is MTVNLRDLSRT. The chain crosses the membrane as a helical span at residues 12–32; it reads IAEFAFLTALVCNSLLIYLTA. Residues 33–37 are Cytoplasmic-facing; that stretch reads RRTKN. The chain crosses the membrane as a helical span at residues 38-58; the sequence is ITGAYKYMIILFALLGLIFSC. Topologically, residues 59 to 92 are extracellular; the sequence is TEMLARPFVHNFNASFVYFSLSNDLSEFKSLVQM. A glycan (N-linked (GlcNAc...) asparagine) is linked at Asn-71. A helical membrane pass occupies residues 93–113; it reads LLVLYSGLYSSLISFVAVQFI. Residues 114-133 are Cytoplasmic-facing; it reads YRYMVLVNANLLESWFTGWK. Residues 134 to 154 form a helical membrane-spanning segment; sequence LVFWVFYVIFFGFAWSASVYF. Over 155 to 204 the chain is Extracellular; the sequence is CLFPDTYSYNYIRTEFKDVYNIGVDRVAIFILVAYEKHPSSEEYKLRPAS. A helical transmembrane segment spans residues 205–225; the sequence is VIMIAGTISILVIQYSIMLFC. At 226 to 258 the chain is on the cytoplasmic side; it reads GASMHRQMNEKLKNFSPDNQRLQKQFFKTLLLQ. Residues 259-279 traverse the membrane as a helical segment; that stretch reads ISVPTVLFHMPIFPVLLGPFF. At 280 to 288 the chain is on the extracellular side; sequence NFEISAESG. A helical transmembrane segment spans residues 289-309; it reads IIYSLFSLYPPIDGLIIMTVV. The Cytoplasmic portion of the chain corresponds to 310–345; it reads TDYRIALTELFLGSHSGAQVEVIPVEVVSILNFSLL.

This sequence belongs to the nematode receptor-like protein str family. Detected in ALM and PLM mechanosensory neurons and head neurons.

The protein resides in the cell membrane. Its function is as follows. Regulates egg-laying and locomotion. Likely to act upstream of goa-1 to suppress 5-hydroxytryptamine (5-HT) biosynthesis in hermaphrodite-specific neurons (HSNs) through inhibition of tph-1 transcription. The sequence is that of G-protein coupled receptor str-33 from Caenorhabditis elegans.